The primary structure comprises 428 residues: Adenylosuccinate synthetase (428 aa).

GTP-binding positions include 11 to 17 (GDEGKGK) and 39 to 41 (GHT). Residue Asp-12 is the Proton acceptor of the active site. The Mg(2+) site is built by Asp-12 and Gly-39. Residues 12-15 (DEGK), 37-40 (NAGH), Thr-130, Arg-144, Asn-226, Thr-241, and Arg-305 contribute to the IMP site. Catalysis depends on His-40, which acts as the Proton donor. 301–307 (VTTGRKR) lines the substrate pocket. Residues Arg-307, 333–335 (KLD), and 415–417 (GTG) contribute to the GTP site.

The protein belongs to the adenylosuccinate synthetase family. In terms of assembly, homodimer. The cofactor is Mg(2+).

The protein resides in the cytoplasm. The catalysed reaction is IMP + L-aspartate + GTP = N(6)-(1,2-dicarboxyethyl)-AMP + GDP + phosphate + 2 H(+). It participates in purine metabolism; AMP biosynthesis via de novo pathway; AMP from IMP: step 1/2. Functionally, plays an important role in the de novo pathway and in the salvage pathway of purine nucleotide biosynthesis. Catalyzes the first committed step in the biosynthesis of AMP from IMP. The sequence is that of Adenylosuccinate synthetase from Candida tropicalis (strain ATCC MYA-3404 / T1) (Yeast).